Here is a 545-residue protein sequence, read N- to C-terminus: Tripartite motif-containing 55 (545 aa).

An RING-type zinc finger spans residues 26-82 (CPICLEMFTKPVVILPCQHNLCRKCASDIFQASNPYLPTRGGTTVASGGRFRCPSCR). A B box-type zinc finger spans residues 119 to 161 (LDQPMCEEHEEERINIYCLNCEVPTCSLCKVFGAHKDCQVAPL). Zn(2+)-binding residues include Cys124, His127, Cys147, and His153. The COS domain maps to 269-327 (MDEPEMAVFLQNAKTLLQKIVEASKAFQMEKLEQGYEIMSNFTVNLNREEKIIREIDFS). Disordered stretches follow at residues 324–352 (IDFS…VEVE), 359–378 (IASS…SQLP), and 417–532 (SQQT…EPAR). A compositionally biased stretch (acidic residues) spans 328–352 (REEEEEEDAGEIDEEGEGEDAVEVE). Positions 417–428 (SQQTTQSETSGP) are enriched in polar residues. Residues 474 to 485 (SSVQSAEVAEAA) are compositionally biased toward low complexity. Polar residues predominate over residues 486-506 (TNEQAAVSGKESSSTAATSQI).

Targeted for degradation through the proteasomal and lysosomal pathways in the presence of SUMO3. As to expression, widely expressed in various tissues, besides skeletal muscle and heart, such as brain, lung, liver, spleen and kidney.

It is found in the nucleus. The protein resides in the cytoplasm. The enzyme catalyses S-ubiquitinyl-[E2 ubiquitin-conjugating enzyme]-L-cysteine + [acceptor protein]-L-lysine = [E2 ubiquitin-conjugating enzyme]-L-cysteine + N(6)-ubiquitinyl-[acceptor protein]-L-lysine.. Functionally, E3 ubiquitin ligase that plays an important role in regulating cardiac development and contractility, muscle growth, metabolism, and fiber-type differentiation. Acts as a critical factor that regulates cardiomyocyte size during development in concert with TRIM63 by regulating E2F1-mediated gene expression. Plays a role in apoptosis induction in cardiomyocytes by promoting ubiquitination of the DUSP1 phosphatase. Promotes non-canonical NF-kappa-B signaling and B-cell-mediated immune responses by mediating NFKB2 'Lys-48'-linked ubiquitination and processing. In turn, NFKB2 is further processed by valosin-containing protein/VCP, an ATPase that mediates ubiquitin-dependent protein degradation by the proteasome. May play a role in preventing macrophages from producing inflammatory factors and migrating by downregulating the level of nuclear NF-kappa-B subunit RELA. Modifies also PPARG via polyubiquitination and accelerates PPARG proteasomal degradation to inhibit its activity. In Mus musculus (Mouse), this protein is Tripartite motif-containing 55 (Trim55).